Here is a 234-residue protein sequence, read N- to C-terminus: Large ribosomal subunit protein uL1 (234 aa).

It belongs to the universal ribosomal protein uL1 family. As to quaternary structure, part of the 50S ribosomal subunit.

In terms of biological role, binds directly to 23S rRNA. The L1 stalk is quite mobile in the ribosome, and is involved in E site tRNA release. Functionally, protein L1 is also a translational repressor protein, it controls the translation of the L11 operon by binding to its mRNA. The sequence is that of Large ribosomal subunit protein uL1 from Helicobacter pylori (strain Shi470).